A 507-amino-acid chain; its full sequence is BPI fold-containing family C protein (507 aa).

The first 23 residues, 1–23 (MCTKTIPVLWGCFLLWNLYVSSS), serve as a signal peptide directing secretion. Asn79, Asn92, and Asn113 each carry an N-linked (GlcNAc...) asparagine glycan. Cys161 and Cys200 are joined by a disulfide. Residues Asn213, Asn225, Asn257, Asn301, Asn355, Asn372, and Asn415 are each glycosylated (N-linked (GlcNAc...) asparagine).

This sequence belongs to the BPI/LBP/Plunc superfamily. BPI/LBP family. Detected in the basal layer of the epidermis from inflammatory skin from psoriasis patients, but not in normal skin.

It is found in the secreted. In Homo sapiens (Human), this protein is BPI fold-containing family C protein (BPIFC).